A 330-amino-acid polypeptide reads, in one-letter code: Cathepsin K (330 aa).

Residues 1–16 (MWGLKVVLLLPVMSSA) form the signal peptide. A propeptide spans 17 to 115 (LYPEEILDTQ…TLYIPDWEGR (99 aa)) (activation peptide). A glycan (N-linked (GlcNAc...) asparagine) is linked at N104. Cystine bridges form between C137/C178, C171/C211, and C270/C319. Residue C140 is part of the active site. Catalysis depends on residues H277 and N297.

It belongs to the peptidase C1 family. As to expression, expressed in the thyroid epithelial cells.

It is found in the lysosome. It localises to the secreted. The protein resides in the apical cell membrane. The enzyme catalyses Broad proteolytic activity. With small-molecule substrates and inhibitors, the major determinant of specificity is P2, which is preferably Leu, Met &gt; Phe, and not Arg.. Thiol protease involved in osteoclastic bone resorption and may participate partially in the disorder of bone remodeling. Displays potent endoprotease activity against fibrinogen at acid pH. May play an important role in extracellular matrix degradation. Involved in the release of thyroid hormone thyroxine (T4) by limited proteolysis of TG/thyroglobulin in the thyroid follicle lumen. The sequence is that of Cathepsin K (CTSK) from Sus scrofa (Pig).